A 42-amino-acid chain; its full sequence is Envelope protein P10 (42 aa).

The chain crosses the membrane as a helical span at residues 20–40 (TTAAKIAVVYALVGLVGGLLL).

It is found in the virion membrane. In terms of biological role, involved in cell lysis. This chain is Envelope protein P10 (P10), found in Pseudomonas savastanoi pv. phaseolicola (Pseudomonas syringae pv. phaseolicola).